Here is a 313-residue protein sequence, read N- to C-terminus: PDCD10 and GCKIII kinases-associated protein 1 (313 aa).

Residues 42–95 (KGTQNSEVEVPGSTLHSGSLSKPDSSGSTTGLPCQGSLTQEDSEERPCVEKHGI) form a disordered region. Positions 58–69 (SGSLSKPDSSGS) are enriched in low complexity. Serine 60 bears the Phosphoserine mark. Polar residues predominate over residues 70-81 (TTGLPCQGSLTQ). Threonine 104 is subject to Phosphothreonine. A phosphoserine mark is found at serine 107, serine 237, and serine 240. The disordered stretch occupies residues 253-288 (YFKEEDPTQPTPVADPGNEREDPHTYNGNKEGAVVD).

As to quaternary structure, interacts with KEAP1; this interaction prevents the ubiquitination of KEAP1 by TRIM25, thus protecting KEAP1 from degradation. Found in association with PDCD10 and members of the STE20 kinases, such as STK24, STK25, and STK26.

The protein localises to the cell membrane. Acts as a tumor suppressor. Acts as a tumor suppressor for colorectal cancer cell proliferation by targeting KEAP1/USP17/ELK1/CDK6 axis. This Rattus norvegicus (Rat) protein is PDCD10 and GCKIII kinases-associated protein 1.